A 425-amino-acid polypeptide reads, in one-letter code: Ribosome biogenesis protein WDR12 homolog (425 aa).

The ubiquitin-like (UBL) domain stretch occupies residues 7–93 (IQAKFFTKDE…ETIVHLEYLE (87 aa)). WD repeat units lie at residues 105–142 (IHDD…RRLT), 145–187 (GHLG…NAVE), 194–233 (GHAR…TDTD), 265–303 (GHHE…MKSQ), 305–344 (AGSK…GTIV), 350–390 (SHAG…APLY), and 394–425 (GHED…FEHK). Residues 227–253 (PDSTDTDHGQDGSEEGSRKKQKTVDGK) form a disordered region. Residues 231–253 (DTDHGQDGSEEGSRKKQKTVDGK) are compositionally biased toward basic and acidic residues.

The protein belongs to the WD repeat WDR12/YTM1 family.

The protein localises to the nucleus. It is found in the nucleolus. Its subcellular location is the nucleoplasm. Functionally, required for maturation of ribosomal RNAs and formation of the large ribosomal subunit. This chain is Ribosome biogenesis protein WDR12 homolog, found in Ixodes scapularis (Black-legged tick).